A 200-amino-acid polypeptide reads, in one-letter code: Imidazole glycerol phosphate synthase subunit HisH (200 aa).

Residues 3–200 (DVALIDAGGA…LRNFLEMSFP (198 aa)) form the Glutamine amidotransferase type-1 domain. Cysteine 78 (nucleophile) is an active-site residue. Catalysis depends on residues histidine 179 and glutamate 181.

As to quaternary structure, heterodimer of HisH and HisF.

The protein resides in the cytoplasm. The catalysed reaction is 5-[(5-phospho-1-deoxy-D-ribulos-1-ylimino)methylamino]-1-(5-phospho-beta-D-ribosyl)imidazole-4-carboxamide + L-glutamine = D-erythro-1-(imidazol-4-yl)glycerol 3-phosphate + 5-amino-1-(5-phospho-beta-D-ribosyl)imidazole-4-carboxamide + L-glutamate + H(+). It carries out the reaction L-glutamine + H2O = L-glutamate + NH4(+). It functions in the pathway amino-acid biosynthesis; L-histidine biosynthesis; L-histidine from 5-phospho-alpha-D-ribose 1-diphosphate: step 5/9. IGPS catalyzes the conversion of PRFAR and glutamine to IGP, AICAR and glutamate. The HisH subunit catalyzes the hydrolysis of glutamine to glutamate and ammonia as part of the synthesis of IGP and AICAR. The resulting ammonia molecule is channeled to the active site of HisF. This is Imidazole glycerol phosphate synthase subunit HisH from Xanthomonas axonopodis pv. citri (strain 306).